A 190-amino-acid polypeptide reads, in one-letter code: Ohanin (190 aa).

Positions 1–20 are cleaved as a signal peptide; that stretch reads MLLFTLCFFADQENGGKALA. Residues 21–127 form the B30.2/SPRY domain; that stretch reads SPPGNWQKAD…RIWQKGLWWL (107 aa). Residues 128-190 constitute a propeptide that is removed on maturation; the sequence is RRLETDSDKL…IGARVSLANL (63 aa).

Expressed by the venom gland.

The protein localises to the secreted. In terms of biological role, neurotoxin that produces dose-dependent hypolocomotion and hyperalgesia in mice. May directly act on the central nervous system, as it is 6500-fold more potent when administered intracerebroventricularly than intraperitoneal. This Ophiophagus hannah (King cobra) protein is Ohanin.